The following is a 591-amino-acid chain: Aspartate--tRNA(Asp/Asn) ligase (591 aa).

Residue E174 coordinates L-aspartate. Residues Q198–K201 are aspartate. Residue R220 coordinates L-aspartate. ATP contacts are provided by residues R220 to E222 and Q229. Residue H450 coordinates L-aspartate. E483 lines the ATP pocket. Residue R490 coordinates L-aspartate. G535–R538 serves as a coordination point for ATP.

The protein belongs to the class-II aminoacyl-tRNA synthetase family. Type 1 subfamily. Homodimer.

It is found in the cytoplasm. It carries out the reaction tRNA(Asx) + L-aspartate + ATP = L-aspartyl-tRNA(Asx) + AMP + diphosphate. In terms of biological role, aspartyl-tRNA synthetase with relaxed tRNA specificity since it is able to aspartylate not only its cognate tRNA(Asp) but also tRNA(Asn). Reaction proceeds in two steps: L-aspartate is first activated by ATP to form Asp-AMP and then transferred to the acceptor end of tRNA(Asp/Asn). The protein is Aspartate--tRNA(Asp/Asn) ligase of Pseudomonas fluorescens (strain ATCC BAA-477 / NRRL B-23932 / Pf-5).